The sequence spans 299 residues: MNSKSSARAAIVDTVEAVKKRKYISIEAGTLNNVVEKERKFLKQFLSGRENLRIAARVFTPCELLAPELENLGMLMYRFETDVDNPKILFVGLFFLCSNAFNVSACVRTALTTMYTNSMVDNVLSMINTCKYLEDKVSLFGVTSLVSCGSSCLLSCVMQGNVYDANKENIHGLTVLKEIFLEPDWEPRQHSTQYVYVVHVYKEVLSKLQYGIYVVLTSFQNEDLVVDILRQYFEKERFLFLNYLINSNTTLSYFGSVQRIGRCATEDIKSGFLQYRGITLPVIKLENIFVDLSEKKVFV.

This sequence belongs to the herpesviridae TRX1 protein family. As to quaternary structure, interacts with TRX2, MCP and capsid vertex component 2/CVC2.

It localises to the virion. Its subcellular location is the host nucleus. Its function is as follows. Structural component of the T=16 icosahedral capsid. The capsid is composed of pentamers and hexamers of major capsid protein/MCP, which are linked together by heterotrimers called triplexes. These triplexes are formed by a single molecule of triplex protein 1/TRX1 and two copies of triplex protein 2/TRX2. Additionally, TRX1 is required for efficient transport of TRX2 to the nucleus, which is the site of capsid assembly. The sequence is that of Triplex capsid protein 1 from Homo sapiens (Human).